The following is a 459-amino-acid chain: tRNA modification GTPase MnmE (459 aa).

3 residues coordinate (6S)-5-formyl-5,6,7,8-tetrahydrofolate: R29, E91, and R130. A TrmE-type G domain is found at 225 to 381; the sequence is GVKVAIVGRP…LEEALEQLVT (157 aa). N235 lines the K(+) pocket. Residues 235 to 240, 254 to 260, and 279 to 282 contribute to the GTP site; these read NVGKSS, TDLPGTT, and DTAG. S239 is a Mg(2+) binding site. Residues T254, L256, and T259 each contribute to the K(+) site. T260 is a binding site for Mg(2+). K459 provides a ligand contact to (6S)-5-formyl-5,6,7,8-tetrahydrofolate.

This sequence belongs to the TRAFAC class TrmE-Era-EngA-EngB-Septin-like GTPase superfamily. TrmE GTPase family. Homodimer. Heterotetramer of two MnmE and two MnmG subunits. K(+) serves as cofactor.

The protein localises to the cytoplasm. Exhibits a very high intrinsic GTPase hydrolysis rate. Involved in the addition of a carboxymethylaminomethyl (cmnm) group at the wobble position (U34) of certain tRNAs, forming tRNA-cmnm(5)s(2)U34. This Synechococcus sp. (strain JA-3-3Ab) (Cyanobacteria bacterium Yellowstone A-Prime) protein is tRNA modification GTPase MnmE.